The chain runs to 98 residues: Lipolysis-activating peptide 1-alpha chain (98 aa).

An N-terminal signal peptide occupies residues 1–22 (MMKFVLFGMIVILFSLMGSIRG). The region spanning 26 to 89 (PGNYPTNAYG…IWNAVKNHCT (64 aa)) is the LCN-type CS-alpha/beta domain. Cystine bridges form between Cys-40-Cys-63, Cys-49-Cys-68, and Cys-53-Cys-70. Asparagine amide is present on Asn-96.

This sequence belongs to the long (3 C-C) scorpion toxin superfamily. In terms of assembly, monomer (edited version) and heterodimer (non-edited version) of this alpha chain and a beta chain (AC Q95P90). Expressed by the venom gland.

It is found in the secreted. The heterodimer non-edited LVP1 induces lipolysis in rat adipocytes. Induction of lipolysis by LVP1 appears to be mediated through the beta-2 adrenergic receptor pathway (ADRB2). In terms of biological role, the edited BmKBTx, similar to beta-toxins, may modulate voltage-gated sodium channels (Nav) and may block voltage-gated potassium channels (Kv). Seems to be a rare component in the venom. This is Lipolysis-activating peptide 1-alpha chain (LVP1a) from Olivierus martensii (Manchurian scorpion).